Here is a 163-residue protein sequence, read N- to C-terminus: Ribonuclease H (163 aa).

An RNase H type-1 domain is found at Thr-16–Thr-157. Residues Asp-25, Glu-63, Asp-85, and Asp-149 each coordinate Mg(2+).

The protein belongs to the RNase H family. Monomer. It depends on Mg(2+) as a cofactor.

It is found in the cytoplasm. It catalyses the reaction Endonucleolytic cleavage to 5'-phosphomonoester.. In terms of biological role, endonuclease that specifically degrades the RNA of RNA-DNA hybrids. This chain is Ribonuclease H, found in Pelobacter propionicus (strain DSM 2379 / NBRC 103807 / OttBd1).